The sequence spans 149 residues: Large-conductance mechanosensitive channel (149 aa).

Transmembrane regions (helical) follow at residues 16–36 (VMDL…VNSV), 40–60 (LIMP…KFIL), and 89–109 (GSFI…FMMV).

It belongs to the MscL family. Homopentamer.

The protein localises to the cell inner membrane. In terms of biological role, channel that opens in response to stretch forces in the membrane lipid bilayer. May participate in the regulation of osmotic pressure changes within the cell. The polypeptide is Large-conductance mechanosensitive channel (Paraburkholderia phymatum (strain DSM 17167 / CIP 108236 / LMG 21445 / STM815) (Burkholderia phymatum)).